A 92-amino-acid polypeptide reads, in one-letter code: RNA-binding protein Hfq (92 aa).

The 60-residue stretch at 9–68 (DPFLNALRRERVPVSIYLVNGIKLQGQVESFDQFVILLKNTVSQMVYKHAISTVVPSRPF) folds into the Sm domain.

Belongs to the Hfq family. In terms of assembly, homohexamer.

Its function is as follows. RNA chaperone that binds small regulatory RNA (sRNAs) and mRNAs to facilitate mRNA translational regulation in response to envelope stress, environmental stress and changes in metabolite concentrations. Also binds with high specificity to tRNAs. The chain is RNA-binding protein Hfq from Shewanella piezotolerans (strain WP3 / JCM 13877).